The following is a 31-amino-acid chain: Cyclotide mech-6 (31 aa).

A cross-link (cyclopeptide (Gly-Asn)) is located at residues 1–31; the sequence is GVIPCGESCVFIPCISSVVGCTCKNKVCYRN. 3 disulfides stabilise this stretch: C5–C21, C9–C23, and C14–C28.

Post-translationally, this is a cyclic peptide. In terms of processing, contains 3 disulfide bonds.

Probably participates in a plant defense mechanism (Potential). Binds to and induces leakage in phospholipd membranes, particularly ones containing 1-palmitoyl-2-oleophosphatidylethanolamine (POPE). The polypeptide is Cyclotide mech-6 (Melicytus chathamicus (Chatham Island mahoe)).